The primary structure comprises 230 residues: Orotidine 5'-phosphate decarboxylase (230 aa).

Residues D11, K34, 61–70 (DLKLHDIPNT), T117, R179, Q188, G208, and R209 contribute to the substrate site. The Proton donor role is filled by K63.

This sequence belongs to the OMP decarboxylase family. Type 1 subfamily. As to quaternary structure, homodimer.

The enzyme catalyses orotidine 5'-phosphate + H(+) = UMP + CO2. It participates in pyrimidine metabolism; UMP biosynthesis via de novo pathway; UMP from orotate: step 2/2. Functionally, catalyzes the decarboxylation of orotidine 5'-monophosphate (OMP) to uridine 5'-monophosphate (UMP). The protein is Orotidine 5'-phosphate decarboxylase of Streptococcus pyogenes serotype M28 (strain MGAS6180).